Consider the following 629-residue polypeptide: tRNA uridine 5-carboxymethylaminomethyl modification enzyme MnmG (629 aa).

FAD contacts are provided by residues G14–G19, V126, and S181. Residue G273–F287 participates in NAD(+) binding. Q370 lines the FAD pocket.

It belongs to the MnmG family. Homodimer. Heterotetramer of two MnmE and two MnmG subunits. FAD serves as cofactor.

Its subcellular location is the cytoplasm. NAD-binding protein involved in the addition of a carboxymethylaminomethyl (cmnm) group at the wobble position (U34) of certain tRNAs, forming tRNA-cmnm(5)s(2)U34. The protein is tRNA uridine 5-carboxymethylaminomethyl modification enzyme MnmG of Bacillus cereus (strain ATCC 14579 / DSM 31 / CCUG 7414 / JCM 2152 / NBRC 15305 / NCIMB 9373 / NCTC 2599 / NRRL B-3711).